We begin with the raw amino-acid sequence, 103 residues long: 11.2 kDa protein (103 aa).

The polypeptide is 11.2 kDa protein (Pseudomonas phage Pf1 (Bacteriophage Pf1)).